A 1057-amino-acid chain; its full sequence is Probable E3 ubiquitin-protein ligase HERC4 (1057 aa).

7 RCC1 repeats span residues 1–51, 52–101, 102–154, 156–207, 208–259, 261–311, and 313–368; these read MLCW…FVLD, DGTV…ALND, KGQV…ALSK, SEVF…VLTL, SGAI…ALTK, GGVF…AFVP, and SGRI…KRIF. The region spanning 730–1057 is the HECT domain; the sequence is KNIDYKKPLK…IDHNEGFSLI (328 aa). The Glycyl thioester intermediate role is filled by Cys-1025.

As to expression, expressed in brain and testis and detected in heart and placenta.

The protein localises to the cytoplasm. It localises to the cytosol. It carries out the reaction S-ubiquitinyl-[E2 ubiquitin-conjugating enzyme]-L-cysteine + [acceptor protein]-L-lysine = [E2 ubiquitin-conjugating enzyme]-L-cysteine + N(6)-ubiquitinyl-[acceptor protein]-L-lysine.. It functions in the pathway protein modification; protein ubiquitination. In terms of biological role, probable E3 ubiquitin-protein ligase involved in either protein trafficking or in the distribution of cellular structures. Required for spermatozoon maturation and fertility, and for the removal of the cytoplasmic droplet of the spermatozoon. E3 ubiquitin-protein ligases accept ubiquitin from an E2 ubiquitin-conjugating enzyme in the form of a thioester and then directly transfer it to targeted substrates. The polypeptide is Probable E3 ubiquitin-protein ligase HERC4 (HERC4) (Homo sapiens (Human)).